Consider the following 554-residue polypeptide: Potassium/proton antiporter CemA (554 aa).

The helical transmembrane segment at 50–70 threads the bilayer; the sequence is SLFVVLFIPFFINIFTKIYVF. Residues 113–410 are insert; sequence KTENFFPEKP…VPYNFNKNTE (298 aa). 3 consecutive transmembrane segments (helical) span residues 429-449, 479-499, and 514-534; these read ISAI…LFLL, MLLF…EVIF, and IIFL…KYWI.

It belongs to the CemA family.

The protein resides in the plastid. It localises to the chloroplast inner membrane. It carries out the reaction K(+)(in) + H(+)(out) = K(+)(out) + H(+)(in). Its function is as follows. Contributes to K(+)/H(+) antiport activity by supporting proton efflux to control proton extrusion and homeostasis in chloroplasts in a light-dependent manner to modulate photosynthesis. Prevents excessive induction of non-photochemical quenching (NPQ) under continuous-light conditions. Indirectly promotes efficient inorganic carbon uptake into chloroplasts. This is Potassium/proton antiporter CemA from Stigeoclonium helveticum (Green alga).